The sequence spans 1527 residues: MNRVSVLSKYQCLKINSPNRFFSKYFTTSTINSTKITNDQSQTNSAGKEISQPILKSQDKLKKSILKTSTDTNFLKDINKKHRQHYIKPQKDDENIILKTLNDLKTNNLNTKELISDRLSELFLNKEMIKLISENEIESINEIFKIVLGAKKSQQPPTVAFFTKSFLNKSSKEFKMKLDSLPIIVYFLSVFESKDIMKSSDSDSDSTATNNYLTVGKGISKKFIQNFQDSISSELDITDLQEHLSDMIKLSKFSRLLGYLTNVEISRDKIKKLKDKNEIFNQLINEFGENINEIEFQNLFKNEIHFISFLLTLSRNQIITILSISNNSCYEEEEEVEEVEEVNVKGEGGELFKRVDKYEDNNKGIFNQNKIKSLIENIPVSKVRERLYWFLLMAKLRYPISENYFNDIEISLHYEKDPSFILFFFNHFKIFGYIPSDSSEAKIFQRYVRVATLDEALHYFDSIKKKPQSLNIIMITHLLLAMNKFNNQLDRKIIIDSTTNTTTNTTINTTINNNKIKKYQRSIENEMLTLYSSKIKDIIGSNSSLYNFTLSQLLHGEKWRKVLFNTLVTQLIEKHINSVTDETLLIINEYFSIHKDDVILKKLYELSKKIHLSKELLSNLTIQFLIHKRDYSNAINSLIELYKQETPILKSTLKLLIKSDPTHPILFEFYKTLPQQFELIEPTNQEQEQDQQDQPPPPQQQQEQQQEQQQQQEQQQQQDQQQQDQQQDQQEKQQIKEIKPKLKEKLESEKLINSELFLECINDPMKLYRILDGKIEILASTFQSIVMKSLESGKYQFVESIISKRFGDSSKSIDKHLLSKLITIPNLPISKDDPYNIEKLLLTNNRSENLALYNKLFNLSLNNGLLNCAKNYILKIIQQSNQRLVTSLCYQGEEALIYSYILSLNNLNIINNNQENNNNNNNDLKETIENQIIKWIESVFGCNSLNEINNDDFVFSILLGFHHSTSAYYKKQIGNLNEQQQLPSSLYLKIRSNLMQVINKYFDLIVLDRMILSSYGLESKYYGEAIDFQKDFISMITINELYQYTILKLNLLEKKNNNNNNNNNNNSYYRISIDKKFIENNDQSFNEIDLLLKNISTKQISVIVPFLMGFIENPSLMKYLSVILSNDLNKYDTATTTTTTTTIGNNFIQRLMESSSNSKEIDFLNISNTFFFKYFISVGDLKSAFKVHFKQIHILIRFRLIQDILKNQPLVMDHIFKIISSELELEQQQQQQQQQQQQQQQQQQQQQQQQQQKSSSPSLDYGLIESLLSVTSILNDSKSIHFSLKLYNLASEHAKLNNSRIPLSITNSKDLVLSGFKNRNDHFQLSENLKISDIEKQMKQTRGAGADGADEIIIKNHLTSSQLLNDIKYILIHSNYKQLKGIGFGVLRGDIPFTINDKIKVFLLVEAFAAEEGREKVNSFLNTPSLLNNSLDFELLRTPKITKLISFIFRTNSSIKHDSNYFPEFSPDFLPNKFKFYSAHLEDINNNDNDNSIQDISNIVNCNSGPESFYYRKVLKYFFKKRILKNL.

4 coiled-coil regions span residues 262 to 293 (NVEI…NINE), 699 to 751 (QQQQ…SEKL), 905 to 932 (NNLN…ENQI), and 1217 to 1255 (KIIS…QKSS). Residues 683–734 (TNQEQEQDQQDQPPPPQQQQEQQQEQQQQQEQQQQQDQQQQDQQQDQQEKQQ) are disordered. Residues 700–728 (QQQEQQQEQQQQQEQQQQQDQQQQDQQQD) show a composition bias toward low complexity.

This is an uncharacterized protein from Dictyostelium discoideum (Social amoeba).